Here is a 325-residue protein sequence, read N- to C-terminus: MIARIWSGESPLWRLLLPLSWLYGLVSGAIRLSYKLGFKRAWRAPVPVVVVGNLTAGGNGKTPVVIWLVEKLQQRGVRVGVVSRGYGGKAAAYPLLLTPETTTAEAGDEPVLIYQRTGAPVAVAPERAAAVKAILAAHNVQIIITDDGLQHYRLARDIEIVVIDGVRRFGNGWWLPAGPMRERASRLKTVDAAIVNGGVARAGEIPMQLAPGLAVNLRTGARCDVAQLSNIVAMAGIGHPPRFFATLEACGAHPQKCVPLADHQTLAPADVQALVGEGQTLVMTEKDAVKCRAFAEDNWWFLPVDARLSGEQPDKLLQHITSLVR.

55 to 62 (TAGGNGKT) provides a ligand contact to ATP.

It belongs to the LpxK family.

The catalysed reaction is a lipid A disaccharide + ATP = a lipid IVA + ADP + H(+). It participates in glycolipid biosynthesis; lipid IV(A) biosynthesis; lipid IV(A) from (3R)-3-hydroxytetradecanoyl-[acyl-carrier-protein] and UDP-N-acetyl-alpha-D-glucosamine: step 6/6. Its function is as follows. Transfers the gamma-phosphate of ATP to the 4'-position of a tetraacyldisaccharide 1-phosphate intermediate (termed DS-1-P) to form tetraacyldisaccharide 1,4'-bis-phosphate (lipid IVA). The protein is Tetraacyldisaccharide 4'-kinase of Salmonella paratyphi B (strain ATCC BAA-1250 / SPB7).